The primary structure comprises 159 residues: MNMKKFVKKPLAIAVLMLASGGMVNMVHAEPTVINSKDISATKTVKEGGSFSVEFKATENEIVSGKLDADTPAFHLVMSDSGEHKGWNVRPTGASEGGQMVSADGTRVDLHTNELSWDNDHWWIDDGSERVEATFFLAAGDEVKAGEYQFTGRVEEYVE.

An N-terminal signal peptide occupies residues 1 to 29 (MNMKKFVKKPLAIAVLMLASGGMVNMVHA).

Forms a homomer composed of subunits assembled in a large structure resistant to proteases and chaotropic agents.

It is found in the fimbrium. Its function is as follows. Major pilus subunit. Expressed only in pathogenic serotypes, it is part of myf, a probable virulence factor. The sequence is that of Fimbrial protein MyfA (myfA) from Yersinia enterocolitica.